The primary structure comprises 437 residues: Probable D-serine dehydratase (437 aa).

Lysine 106 is subject to N6-(pyridoxal phosphate)lysine.

The protein belongs to the serine/threonine dehydratase family. DsdA subfamily. Requires pyridoxal 5'-phosphate as cofactor.

It catalyses the reaction D-serine = pyruvate + NH4(+). This is Probable D-serine dehydratase from Hahella chejuensis (strain KCTC 2396).